Consider the following 468-residue polypeptide: uncharacterized protein (468 aa).

The 69-residue stretch at 1–69 folds into the HTH gntR-type domain; that stretch reads MKKYQQLAEQ…PQSGYYVAPQ (69 aa). Lys312 carries the N6-(pyridoxal phosphate)lysine modification.

In the C-terminal section; belongs to the class-I pyridoxal-phosphate-dependent aminotransferase family.

This is an uncharacterized protein from Escherichia coli (strain K12).